The sequence spans 156 residues: Lipoprotein signal peptidase (156 aa).

A run of 3 helical transmembrane segments spans residues 5–25 (FKFI…DQWV), 64–84 (YLHL…KTLL), and 89–109 (IAFG…FIHG). Catalysis depends on residues D113 and D130. The helical transmembrane segment at 122–142 (NFAIFNVADVMINISVALILI) threads the bilayer.

This sequence belongs to the peptidase A8 family.

It is found in the cell inner membrane. The catalysed reaction is Release of signal peptides from bacterial membrane prolipoproteins. Hydrolyzes -Xaa-Yaa-Zaa-|-(S,diacylglyceryl)Cys-, in which Xaa is hydrophobic (preferably Leu), and Yaa (Ala or Ser) and Zaa (Gly or Ala) have small, neutral side chains.. Its pathway is protein modification; lipoprotein biosynthesis (signal peptide cleavage). Functionally, this protein specifically catalyzes the removal of signal peptides from prolipoproteins. The chain is Lipoprotein signal peptidase from Campylobacter jejuni subsp. jejuni serotype O:6 (strain 81116 / NCTC 11828).